We begin with the raw amino-acid sequence, 412 residues long: Divalent metal cation transporter MntH (412 aa).

Residues 1–19 lie on the Cytoplasmic side of the membrane; the sequence is MTNYRVESSSGRAARKMRL. Residues 20–39 traverse the membrane as a helical segment; it reads ALMGPAFIAAIGYIDPGNFA. Over 40 to 51 the chain is Periplasmic; that stretch reads TNIQAGASFGYQ. Residues 52–71 form a helical membrane-spanning segment; it reads LLWVVVWANLMAMLIQILSA. At 72–95 the chain is on the cytoplasmic side; it reads KLGIATGKNLAEQIRDHYPRPVVW. The chain crosses the membrane as a helical span at residues 96-118; sequence FYWVQAEIIAMATDLAEFIGAAI. The Periplasmic segment spans residues 119–125; that stretch reads GFKLILG. A helical membrane pass occupies residues 126–145; that stretch reads VSLLQGAVLTGIATFLILML. At 146–155 the chain is on the cytoplasmic side; it reads QRRGQKPLEK. Residues 156–175 traverse the membrane as a helical segment; that stretch reads VIGGLLLFVAAAYIVELIFS. Topologically, residues 176–196 are periplasmic; that stretch reads QPNLAQLGKGMVIPSLPTSEA. Residues 197-220 traverse the membrane as a helical segment; sequence VFLAAGVLGATIMPHVIYLHSSLT. The Cytoplasmic portion of the chain corresponds to 221–238; it reads QHLHGGSRQQRYSATKWD. The chain crosses the membrane as a helical span at residues 239-258; that stretch reads VAIAMTIAGFVNLAMMATAA. The Periplasmic portion of the chain corresponds to 259–276; it reads AAFHFSGHTGVADLDEAY. A helical transmembrane segment spans residues 277–297; it reads LTLQPLLSHAAATVFGLSLVA. Topologically, residues 298–327 are cytoplasmic; sequence AGLSSTVVGTLAGQVVMQGFIRFHIPLWVR. The chain crosses the membrane as a helical span at residues 328 to 344; sequence RTVTMLPSFIVILMGLD. The Periplasmic segment spans residues 345 to 350; the sequence is PTRILV. A helical transmembrane segment spans residues 351–370; it reads MSQVLLSFGIALALVPLLIF. The Cytoplasmic segment spans residues 371–387; it reads TSDSKLMGDLVNSKRVK. Residues 388–406 traverse the membrane as a helical segment; sequence QTGWVIVVLVVALNIWLLV. The Periplasmic portion of the chain corresponds to 407–412; sequence GTALGL.

It belongs to the NRAMP family.

Its subcellular location is the cell inner membrane. Functionally, h(+)-stimulated, divalent metal cation uptake system. The chain is Divalent metal cation transporter MntH from Escherichia fergusonii (strain ATCC 35469 / DSM 13698 / CCUG 18766 / IAM 14443 / JCM 21226 / LMG 7866 / NBRC 102419 / NCTC 12128 / CDC 0568-73).